The following is a 262-amino-acid chain: Snake venom serine proteinase 1 (262 aa).

Residues 1–18 form the signal peptide; it reads MVLIRVLANLLILQLSYA. A propeptide spanning residues 19 to 24 is cleaved from the precursor; that stretch reads QKSSEL. Positions 25–253 constitute a Peptidase S1 domain; sequence VIGGDECNIN…HLDWIQSIIA (229 aa). 5 disulfide bridges follow: Cys31–Cys165, Cys52–Cys68, Cys144–Cys214, Cys176–Cys193, and Cys204–Cys229. Catalysis depends on His67, which acts as the Charge relay system. A glycan (N-linked (GlcNAc...) asparagine) is linked at Asn105. The Charge relay system role is filled by Asp112. The Charge relay system role is filled by Ser208.

It belongs to the peptidase S1 family. Snake venom subfamily. As to quaternary structure, monomer. In terms of tissue distribution, expressed by the venom gland.

It localises to the secreted. In terms of biological role, snake venom serine protease that may act in the hemostasis system of the prey. The protein is Snake venom serine proteinase 1 of Crotalus adamanteus (Eastern diamondback rattlesnake).